A 748-amino-acid chain; its full sequence is Translation factor GUF1 homolog 2, mitochondrial (748 aa).

Residues Met-1–Trp-29 constitute a mitochondrion transit peptide. Residues Ser-94–Thr-276 form the tr-type G domain. GTP-binding positions include Ala-103–Thr-110, Asp-167–His-171, and Thr-221–Asp-224.

The protein belongs to the TRAFAC class translation factor GTPase superfamily. Classic translation factor GTPase family. LepA subfamily.

The protein localises to the mitochondrion inner membrane. The enzyme catalyses GTP + H2O = GDP + phosphate + H(+). Promotes mitochondrial protein synthesis. May act as a fidelity factor of the translation reaction, by catalyzing a one-codon backward translocation of tRNAs on improperly translocated ribosomes. Binds to mitochondrial ribosomes in a GTP-dependent manner. This chain is Translation factor GUF1 homolog 2, mitochondrial, found in Trypanosoma cruzi (strain CL Brener).